The following is a 271-amino-acid chain: Putative hydro-lyase blr2921 (271 aa).

This sequence belongs to the D-glutamate cyclase family.

The protein is Putative hydro-lyase blr2921 of Bradyrhizobium diazoefficiens (strain JCM 10833 / BCRC 13528 / IAM 13628 / NBRC 14792 / USDA 110).